Here is a 241-residue protein sequence, read N- to C-terminus: Small ribosomal subunit protein uS3 (241 aa).

One can recognise a KH type-2 domain in the interval 39 to 107 (MRKFVMDELK…ETHLNIVEVR (69 aa)). The tract at residues 214-241 (ASERRALEGDAQGPASRDRDRDRRRDNA) is disordered. Positions 229–241 (SRDRDRDRRRDNA) are enriched in basic and acidic residues.

The protein belongs to the universal ribosomal protein uS3 family. Part of the 30S ribosomal subunit. Forms a tight complex with proteins S10 and S14.

Functionally, binds the lower part of the 30S subunit head. Binds mRNA in the 70S ribosome, positioning it for translation. In Rhizobium rhizogenes (strain K84 / ATCC BAA-868) (Agrobacterium radiobacter), this protein is Small ribosomal subunit protein uS3.